The primary structure comprises 33 residues: MLLAAVGDDELTDSEDESDLFHEELEDFYDLDL.

The polypeptide is Putative makorin-5 (MKRN9P) (Homo sapiens (Human)).